The following is a 471-amino-acid chain: Ribulose bisphosphate carboxylase large chain (471 aa).

K5 bears the N6,N6,N6-trimethyllysine mark. Substrate is bound by residues N114 and T164. K166 functions as the Proton acceptor in the catalytic mechanism. Position 168 (K168) interacts with substrate. Positions 192, 194, and 195 each coordinate Mg(2+). K192 is modified (N6-carboxylysine). H285 acts as the Proton acceptor in catalysis. 3 residues coordinate substrate: R286, H318, and S370.

It belongs to the RuBisCO large chain family. Type I subfamily. In terms of assembly, heterohexadecamer of 8 large chains and 8 small chains; disulfide-linked. The disulfide link is formed within the large subunit homodimers. Mg(2+) is required as a cofactor. Post-translationally, the disulfide bond which can form in the large chain dimeric partners within the hexadecamer appears to be associated with oxidative stress and protein turnover.

The protein localises to the plastid. Its subcellular location is the chloroplast. The catalysed reaction is 2 (2R)-3-phosphoglycerate + 2 H(+) = D-ribulose 1,5-bisphosphate + CO2 + H2O. The enzyme catalyses D-ribulose 1,5-bisphosphate + O2 = 2-phosphoglycolate + (2R)-3-phosphoglycerate + 2 H(+). Its function is as follows. RuBisCO catalyzes two reactions: the carboxylation of D-ribulose 1,5-bisphosphate, the primary event in carbon dioxide fixation, as well as the oxidative fragmentation of the pentose substrate in the photorespiration process. Both reactions occur simultaneously and in competition at the same active site. The protein is Ribulose bisphosphate carboxylase large chain of Schlumbergera truncata (Thanksgiving cactus).